The primary structure comprises 309 residues: MSQNVIRIATRKSPLALWQAEFVKAELEKFHPDLTVELLPMSTKGDIILDTPLAKVGGKGLFVKELEVAMLENRADIAVHSMKDVPVDFPEGLGLEIICEREDPRDAFVSNNYKSISELPKGAVVGTSSLRRQCQIRAARPDLQIRDLRGNVGTRLGKLDAGTYDAIILAAAGLKRLKLEERITSFISAEESLPANGQGAVGIECRTDDERVKALLAPLEHAETRFRVIAERAMNTHLEGGCQVPIGAYAEIVDDTLTLRGLVGNPDGTQIIASTKVGPKTDAKALGISLAEELLSKGAKTILDAVYIK.

The residue at position 242 (C242) is an S-(dipyrrolylmethanemethyl)cysteine.

This sequence belongs to the HMBS family. In terms of assembly, monomer. Dipyrromethane serves as cofactor.

It catalyses the reaction 4 porphobilinogen + H2O = hydroxymethylbilane + 4 NH4(+). Its pathway is porphyrin-containing compound metabolism; protoporphyrin-IX biosynthesis; coproporphyrinogen-III from 5-aminolevulinate: step 2/4. Functionally, tetrapolymerization of the monopyrrole PBG into the hydroxymethylbilane pre-uroporphyrinogen in several discrete steps. The protein is Porphobilinogen deaminase of Shewanella woodyi (strain ATCC 51908 / MS32).